The following is a 117-amino-acid chain: Ig heavy chain V region 1-62-3 (117 aa).

An N-terminal signal peptide occupies residues 1–19; the sequence is MGWSCIMLFLAATATGVHF. Positions 20-49 are framework-1; that stretch reads QVQLQQPGAELVKPGASVKLSSKASGYTFT. The tract at residues 50-54 is complementarity-determining-1; it reads SYWMH. Positions 55 to 68 are framework-2; that stretch reads WVKQRPGRGLEWIG. A complementarity-determining-2 region spans residues 69–85; that stretch reads RIDPNSGGTKYNEKFKS. The framework-3 stretch occupies residues 86-117; the sequence is KATLTVDKPSSTAYMQLSSLTSEDSAVYYCAR.

The polypeptide is Ig heavy chain V region 1-62-3 (Ighv1-62-3) (Mus musculus (Mouse)).